A 529-amino-acid chain; its full sequence is Zinc metalloproteinase MspA (529 aa).

Residues 1–24 form the signal peptide; that stretch reads MHHNYYLSPLAVALALGMVSPAKA. A propeptide spanning residues 25–204 is cleaved from the precursor; that stretch reads ADPILLQNAS…PFVQWNDIKT (180 aa). Residue histidine 365 participates in Zn(2+) binding. Glutamate 366 is a catalytic residue. Histidine 369 and glutamate 389 together coordinate Zn(2+). The active-site Proton donor is the histidine 451.

Belongs to the peptidase M4 family. Requires Zn(2+) as cofactor.

This is Zinc metalloproteinase MspA (mspA) from Legionella longbeachae.